A 205-amino-acid chain; its full sequence is Thymidylate kinase (205 aa).

7 to 14 (GIDGSGKT) is a binding site for ATP.

Belongs to the thymidylate kinase family.

It catalyses the reaction dTMP + ATP = dTDP + ADP. Functionally, phosphorylation of dTMP to form dTDP in both de novo and salvage pathways of dTTP synthesis. The protein is Thymidylate kinase of Wolbachia sp. subsp. Brugia malayi (strain TRS).